Consider the following 125-residue polypeptide: Prefoldin subunit beta (125 aa).

This sequence belongs to the prefoldin subunit beta family. Heterohexamer of two alpha and four beta subunits.

Its subcellular location is the cytoplasm. Functionally, molecular chaperone capable of stabilizing a range of proteins. Seems to fulfill an ATP-independent, HSP70-like function in archaeal de novo protein folding. This Sulfurisphaera tokodaii (strain DSM 16993 / JCM 10545 / NBRC 100140 / 7) (Sulfolobus tokodaii) protein is Prefoldin subunit beta (pfdB).